The sequence spans 187 residues: V-type ATP synthase subunit E (187 aa).

It belongs to the V-ATPase E subunit family.

Functionally, produces ATP from ADP in the presence of a proton gradient across the membrane. The sequence is that of V-type ATP synthase subunit E from Clostridioides difficile (strain 630) (Peptoclostridium difficile).